We begin with the raw amino-acid sequence, 225 residues long: MGIKDWPQGEGPREKLLLKGAGHLSDAELLAVILRNGLAGQNAVDLARNMINQFGGLRSLLSASKSQVCKLAGVGPVKYAQLQAAVEISKRIAHENLQRGQILTNPDLTRDYLMRQLADRSYEVFALLLLDTQHRVIQFVELFRGTIDSASVYPREVVSLVLEKKAAAVIVCHNHPSGIAEPSQADRRITERIKNALATIDVSLLDHMVVGDQEIVSFAERGWIV.

The MPN domain maps to 102 to 224; that stretch reads ILTNPDLTRD…IVSFAERGWI (123 aa). 3 residues coordinate Zn(2+): His-173, His-175, and Asp-186. The short motif at 173-186 is the JAMM motif element; that stretch reads HNHPSGIAEPSQAD.

Belongs to the UPF0758 family.

The sequence is that of UPF0758 protein Sfri_3828 from Shewanella frigidimarina (strain NCIMB 400).